Here is an 87-residue protein sequence, read N- to C-terminus: uncharacterized protein (87 aa).

A run of 2 helical transmembrane segments spans residues leucine 25 to glycine 45 and tyrosine 53 to phenylalanine 73.

It localises to the cell membrane. This is an uncharacterized protein from Paracoccus denitrificans.